The sequence spans 443 residues: Tol-Pal system protein TolB (443 aa).

The first 33 residues, 1–33 (MKIGIINTKIRTVFSAFACMIAASLVCTMPARA), serve as a signal peptide directing secretion.

The protein belongs to the TolB family. The Tol-Pal system is composed of five core proteins: the inner membrane proteins TolA, TolQ and TolR, the periplasmic protein TolB and the outer membrane protein Pal. They form a network linking the inner and outer membranes and the peptidoglycan layer.

It is found in the periplasm. Functionally, part of the Tol-Pal system, which plays a role in outer membrane invagination during cell division and is important for maintaining outer membrane integrity. This chain is Tol-Pal system protein TolB, found in Brucella melitensis biotype 1 (strain ATCC 23456 / CCUG 17765 / NCTC 10094 / 16M).